The sequence spans 143 residues: Large ribosomal subunit protein uL11 (143 aa).

Belongs to the universal ribosomal protein uL11 family. Part of the ribosomal stalk of the 50S ribosomal subunit. Interacts with L10 and the large rRNA to form the base of the stalk. L10 forms an elongated spine to which L12 dimers bind in a sequential fashion forming a multimeric L10(L12)X complex. Post-translationally, one or more lysine residues are methylated.

Its function is as follows. Forms part of the ribosomal stalk which helps the ribosome interact with GTP-bound translation factors. This Zymomonas mobilis subsp. mobilis (strain ATCC 31821 / ZM4 / CP4) protein is Large ribosomal subunit protein uL11.